The chain runs to 92 residues: Small ribosomal subunit protein uS19 (92 aa).

The protein belongs to the universal ribosomal protein uS19 family.

Functionally, protein S19 forms a complex with S13 that binds strongly to the 16S ribosomal RNA. This Baumannia cicadellinicola subsp. Homalodisca coagulata protein is Small ribosomal subunit protein uS19.